Reading from the N-terminus, the 100-residue chain is Urease subunit gamma (100 aa).

Belongs to the urease gamma subunit family. Heterotrimer of UreA (gamma), UreB (beta) and UreC (alpha) subunits. Three heterotrimers associate to form the active enzyme.

It is found in the cytoplasm. It carries out the reaction urea + 2 H2O + H(+) = hydrogencarbonate + 2 NH4(+). The protein operates within nitrogen metabolism; urea degradation; CO(2) and NH(3) from urea (urease route): step 1/1. This chain is Urease subunit gamma, found in Prochlorococcus marinus (strain MIT 9313).